We begin with the raw amino-acid sequence, 461 residues long: Elongation factor 1-alpha (461 aa).

Residues 5-242 (KIHINIVVIG…DAILPPSRPT (238 aa)) form the tr-type G domain. The interval 14 to 21 (GHVDSGKS) is G1. Residue 14–21 (GHVDSGKS) participates in GTP binding. A G2 region spans residues 70–74 (GITID). Residues 91 to 94 (DAPG) form a G3 region. Residues 91-95 (DAPGH) and 153-156 (NKMD) contribute to the GTP site. Residues 153–156 (NKMD) form a G4 region. A G5 region spans residues 194-196 (SGW). 2 positions are modified to 5-glutamyl glycerylphosphorylethanolamine: E301 and E374.

Belongs to the TRAFAC class translation factor GTPase superfamily. Classic translation factor GTPase family. EF-Tu/EF-1A subfamily.

Its subcellular location is the cytoplasm. This protein promotes the GTP-dependent binding of aminoacyl-tRNA to the A-site of ribosomes during protein biosynthesis. This Apis mellifera (Honeybee) protein is Elongation factor 1-alpha.